The chain runs to 373 residues: Dual-specificity RNA methyltransferase RlmN (373 aa).

The active-site Proton acceptor is the Glu94. The region spanning 100–339 is the Radical SAM core domain; the sequence is EDDRATLCVS…VIVRKTRGDD (240 aa). A disulfide bond links Cys107 and Cys344. [4Fe-4S] cluster is bound by residues Cys114, Cys118, and Cys121. S-adenosyl-L-methionine-binding positions include 168–169, Ser200, 222–224, and Asn301; these read GE and SIH. Catalysis depends on Cys344, which acts as the S-methylcysteine intermediate.

This sequence belongs to the radical SAM superfamily. RlmN family. [4Fe-4S] cluster is required as a cofactor.

It localises to the cytoplasm. It catalyses the reaction adenosine(2503) in 23S rRNA + 2 reduced [2Fe-2S]-[ferredoxin] + 2 S-adenosyl-L-methionine = 2-methyladenosine(2503) in 23S rRNA + 5'-deoxyadenosine + L-methionine + 2 oxidized [2Fe-2S]-[ferredoxin] + S-adenosyl-L-homocysteine. The catalysed reaction is adenosine(37) in tRNA + 2 reduced [2Fe-2S]-[ferredoxin] + 2 S-adenosyl-L-methionine = 2-methyladenosine(37) in tRNA + 5'-deoxyadenosine + L-methionine + 2 oxidized [2Fe-2S]-[ferredoxin] + S-adenosyl-L-homocysteine. In terms of biological role, specifically methylates position 2 of adenine 2503 in 23S rRNA and position 2 of adenine 37 in tRNAs. m2A2503 modification seems to play a crucial role in the proofreading step occurring at the peptidyl transferase center and thus would serve to optimize ribosomal fidelity. The protein is Dual-specificity RNA methyltransferase RlmN of Shewanella pealeana (strain ATCC 700345 / ANG-SQ1).